Consider the following 332-residue polypeptide: Glyceraldehyde-3-phosphate dehydrogenase (332 aa).

Residues 12–13, aspartate 34, lysine 78, and threonine 120 contribute to the NAD(+) site; that span reads RI. D-glyceraldehyde 3-phosphate contacts are provided by residues 149 to 151, threonine 180, 209 to 210, and arginine 232; these read SCT and TG. Catalysis depends on cysteine 150, which acts as the Nucleophile. Position 314 (asparagine 314) interacts with NAD(+).

Belongs to the glyceraldehyde-3-phosphate dehydrogenase family. Homotetramer.

The protein localises to the cytoplasm. It catalyses the reaction D-glyceraldehyde 3-phosphate + phosphate + NAD(+) = (2R)-3-phospho-glyceroyl phosphate + NADH + H(+). It participates in carbohydrate degradation; glycolysis; pyruvate from D-glyceraldehyde 3-phosphate: step 1/5. In terms of biological role, catalyzes the oxidative phosphorylation of glyceraldehyde 3-phosphate (G3P) to 1,3-bisphosphoglycerate (BPG) using the cofactor NAD. The first reaction step involves the formation of a hemiacetal intermediate between G3P and a cysteine residue, and this hemiacetal intermediate is then oxidized to a thioester, with concomitant reduction of NAD to NADH. The reduced NADH is then exchanged with the second NAD, and the thioester is attacked by a nucleophilic inorganic phosphate to produce BPG. This is Glyceraldehyde-3-phosphate dehydrogenase (gapA) from Buchnera aphidicola subsp. Schizaphis graminum (strain Sg).